The sequence spans 177 residues: Glutathione peroxidase homolog (177 aa).

Cys-35 is a catalytic residue.

Belongs to the glutathione peroxidase family.

Important in the cellular metabolism or defense processes particular to this pathogen. In Neisseria meningitidis serogroup A / serotype 4A (strain DSM 15465 / Z2491), this protein is Glutathione peroxidase homolog (gpxA).